The chain runs to 151 residues: Large ribosomal subunit protein bL9 (151 aa).

This sequence belongs to the bacterial ribosomal protein bL9 family.

Functionally, binds to the 23S rRNA. The sequence is that of Large ribosomal subunit protein bL9 from Mycoplasmopsis agalactiae (strain NCTC 10123 / CIP 59.7 / PG2) (Mycoplasma agalactiae).